A 169-amino-acid chain; its full sequence is Copper-resistant cuproprotein CopI (169 aa).

The N-terminal stretch at 1–20 is a signal peptide; sequence MIKKTLLVIALTFTVTTAFA. Positions 98, 153, 158, and 163 each coordinate Cu(2+).

This sequence belongs to the CopI family.

Its subcellular location is the periplasm. Functionally, involved in copper tolerance. Mediates copper tolerance in aerobiosis. May also mediate tolerance under anaerobiosis. Not required for virulence or colonization in the mouse model. This Vibrio cholerae serotype O1 (strain ATCC 39315 / El Tor Inaba N16961) protein is Copper-resistant cuproprotein CopI.